A 139-amino-acid chain; its full sequence is Small ribosomal subunit protein uS12 (139 aa).

Position 102 is a 3-methylthioaspartic acid (Asp-102).

It belongs to the universal ribosomal protein uS12 family. Part of the 30S ribosomal subunit. Contacts proteins S8 and S17. May interact with IF1 in the 30S initiation complex.

Its function is as follows. With S4 and S5 plays an important role in translational accuracy. Functionally, interacts with and stabilizes bases of the 16S rRNA that are involved in tRNA selection in the A site and with the mRNA backbone. Located at the interface of the 30S and 50S subunits, it traverses the body of the 30S subunit contacting proteins on the other side and probably holding the rRNA structure together. The combined cluster of proteins S8, S12 and S17 appears to hold together the shoulder and platform of the 30S subunit. In Mycoplasma capricolum subsp. capricolum (strain California kid / ATCC 27343 / NCTC 10154), this protein is Small ribosomal subunit protein uS12.